A 107-amino-acid chain; its full sequence is Nucleoid-associated protein BLi00029/BL02358 (107 aa).

Residues methionine 1–glutamate 27 form a disordered region. Low complexity predominate over residues methionine 8–lysine 17. Basic and acidic residues predominate over residues methionine 18 to glutamate 27.

It belongs to the YbaB/EbfC family. In terms of assembly, homodimer.

The protein resides in the cytoplasm. The protein localises to the nucleoid. Its function is as follows. Binds to DNA and alters its conformation. May be involved in regulation of gene expression, nucleoid organization and DNA protection. The polypeptide is Nucleoid-associated protein BLi00029/BL02358 (Bacillus licheniformis (strain ATCC 14580 / DSM 13 / JCM 2505 / CCUG 7422 / NBRC 12200 / NCIMB 9375 / NCTC 10341 / NRRL NRS-1264 / Gibson 46)).